A 356-amino-acid polypeptide reads, in one-letter code: Glycerol-1-phosphate dehydrogenase [NAD(P)+] (356 aa).

NAD(+) is bound by residues 103–107 and 125–128; these read GRSID and TAAS. D130 is a substrate binding site. S134 contacts NAD(+). D177 provides a ligand contact to substrate. Residues D177 and H257 each contribute to the Zn(2+) site. H261 serves as a coordination point for substrate. Residue H273 coordinates Zn(2+).

It belongs to the glycerol-1-phosphate dehydrogenase family. The cofactor is Zn(2+).

The protein resides in the cytoplasm. It catalyses the reaction sn-glycerol 1-phosphate + NAD(+) = dihydroxyacetone phosphate + NADH + H(+). The catalysed reaction is sn-glycerol 1-phosphate + NADP(+) = dihydroxyacetone phosphate + NADPH + H(+). The protein operates within membrane lipid metabolism; glycerophospholipid metabolism. Its function is as follows. Catalyzes the NAD(P)H-dependent reduction of dihydroxyacetonephosphate (DHAP or glycerone phosphate) to glycerol 1-phosphate (G1P). The G1P thus generated is used as the glycerophosphate backbone of phospholipids in the cellular membranes of Archaea. This Methanosarcina mazei (strain ATCC BAA-159 / DSM 3647 / Goe1 / Go1 / JCM 11833 / OCM 88) (Methanosarcina frisia) protein is Glycerol-1-phosphate dehydrogenase [NAD(P)+].